Consider the following 740-residue polypeptide: Copalyl diphosphate synthase 2 (740 aa).

A substrate-binding site is contributed by lysine 154. The Mg(2+) site is built by aspartate 287 and aspartate 289. The short motif at 287–290 (DADD) is the DXDD motif element. Lysine 373 lines the substrate pocket.

It belongs to the terpene synthase family. Requires Mg(2+) as cofactor.

The enzyme catalyses (2E,6E,10E)-geranylgeranyl diphosphate = (+)-copalyl diphosphate. The protein operates within secondary metabolite biosynthesis; terpenoid biosynthesis. In terms of biological role, monofunctional diterpene synthase converting geranylgeranyl diphosphate to copalyl diphosphate. This is Copalyl diphosphate synthase 2 (CPS2) from Selaginella moellendorffii (Spikemoss).